The primary structure comprises 150 residues: UPF0506 protein SJCHGC03047 (150 aa).

The N-terminal stretch at 1–18 is a signal peptide; sequence MNTCIQLLILCLVTLTNS. Asn-20, Asn-48, and Asn-110 each carry an N-linked (GlcNAc...) asparagine glycan. 3 disulfides stabilise this stretch: Cys-116/Cys-130, Cys-123/Cys-134, and Cys-129/Cys-139.

The protein belongs to the UPF0506 family.

It is found in the secreted. The sequence is that of UPF0506 protein SJCHGC03047 from Schistosoma japonicum (Blood fluke).